We begin with the raw amino-acid sequence, 83 residues long: Hainantoxin-III 2 (83 aa).

A signal peptide spans 1–21; sequence MKASMYLALAGLVLLFVVGYA. Positions 22-48 are excised as a propeptide; sequence SESEEKEFPRELLSKIFAVDDFKGEER. Intrachain disulfides connect Cys50/Cys65, Cys57/Cys70, and Cys64/Cys77. Residue Leu81 is modified to Leucine amide.

Belongs to the neurotoxin 10 (Hwtx-1) family. 15 (Hntx-3) subfamily. In terms of assembly, monomer. Expressed by the venom gland.

The protein resides in the secreted. Selective antagonist of neuronal tetrodotoxin (TTX)-sensitive voltage-gated sodium channels (IC(50)=1270 nM on Nav1.1/SCN1A, 270 nM on Nav1.2/SCN2A, 491 nM on Nav1.3/SCN3A and 232 nM on Nav1.7/SCN9A). This toxin suppress Nav1.7 current amplitude without significantly altering the activation, inactivation, and repriming kinetics. Short extreme depolarizations partially activate the toxin-bound channel, indicating voltage-dependent inhibition of this toxin. This toxin increases the deactivation of the Nav1.7 current after extreme depolarizations. The toxin-Nav1.7 complex is gradually dissociated upon prolonged strong depolarizations in a voltage-dependent manner, and the unbound toxin rebinds to Nav1.7 after a long repolarization. Moreover, analysis of chimeric channels showed that the DIIS3-S4 linker is critical for toxin binding to Nav1.7. These data are consistent with this toxin interacting with Nav1.7 site 4 and trapping the domain II voltage sensor in the closed state. The sequence is that of Hainantoxin-III 2 from Cyriopagopus hainanus (Chinese bird spider).